Consider the following 251-residue polypeptide: MLAKRIIPCLDVRDGRVVKGINFEGLRDAGSILEQARFYNNELADELVFLDISASLESRKTTLEEVLKVSGEIFIPLTVGGGINSVERAREVFLHGADKVSVNTAAVNDPFLITRIAERYGSQAVVVAIDIKKTGEDYLVFTHSGKKPTCYEALEWAHKVQELGAGEILLTSMDRDGTKEGYDNDILAKISTSVHIPVIASGGAGNLEHLYDGFTKGHADAALAASIFHFRQHSIREAKEYLRQRGITVRI.

Residues Asp-11 and Asp-130 contribute to the active site.

Belongs to the HisA/HisF family. In terms of assembly, heterodimer of HisH and HisF.

It localises to the cytoplasm. The enzyme catalyses 5-[(5-phospho-1-deoxy-D-ribulos-1-ylimino)methylamino]-1-(5-phospho-beta-D-ribosyl)imidazole-4-carboxamide + L-glutamine = D-erythro-1-(imidazol-4-yl)glycerol 3-phosphate + 5-amino-1-(5-phospho-beta-D-ribosyl)imidazole-4-carboxamide + L-glutamate + H(+). The protein operates within amino-acid biosynthesis; L-histidine biosynthesis; L-histidine from 5-phospho-alpha-D-ribose 1-diphosphate: step 5/9. Its function is as follows. IGPS catalyzes the conversion of PRFAR and glutamine to IGP, AICAR and glutamate. The HisF subunit catalyzes the cyclization activity that produces IGP and AICAR from PRFAR using the ammonia provided by the HisH subunit. The sequence is that of Imidazole glycerol phosphate synthase subunit HisF from Pelodictyon phaeoclathratiforme (strain DSM 5477 / BU-1).